We begin with the raw amino-acid sequence, 260 residues long: Cell wall synthesis protein Wag31 (260 aa).

The stretch at 31–64 forms a coiled coil; that stretch reads FLDLVENELTRLIEENSDLRQRINELDQELAAGG. Thr73 carries the phosphothreonine modification. A coiled-coil region spans residues 161 to 196; it reads MLADAQSRSEAQLRQAQEKADALQADAERKHSEIMG. The tract at residues 233–260 is disordered; the sequence is ELGQRGSAAPVDSNADAGGFDQFNRGKN.

Belongs to the DivIVA family. As to quaternary structure, forms homooligomers. Post-translationally, phosphorylated by PknA. Phosphorylation enhances polar localization, which in turn heightens polar peptidoglycan biosynthesis.

The protein resides in the cytoplasm. In terms of biological role, important for maintaining cell shape and cell wall integrity by localizing peptidoglycan synthesis to the cell poles. The polypeptide is Cell wall synthesis protein Wag31 (wag31) (Mycobacterium tuberculosis (strain CDC 1551 / Oshkosh)).